The following is a 363-amino-acid chain: Protein-arginine kinase (363 aa).

A Phosphagen kinase C-terminal domain is found at 24–255 (IVLSSRIRLA…EQLIAQERAA (232 aa)). Residues 27–31 (SSRIR), His92, Arg126, 177–181 (RASVM), and 208–213 (RGTYGE) each bind ATP. The RDXXRA motif of the pArg binding pocket involved in allosteric regulation signature appears at 338 to 343 (RDVRRA).

Belongs to the ATP:guanido phosphotransferase family. Homodimer. Dimerization is important for full catalytic activity.

The enzyme catalyses L-arginyl-[protein] + ATP = N(omega)-phospho-L-arginyl-[protein] + ADP + H(+). Its activity is regulated as follows. Appears to be allosterically activated by the binding of pArg-containing polypeptides to the pArg-binding pocket localized in the C-terminal domain of McsB. Its function is as follows. Catalyzes the specific phosphorylation of arginine residues in a large number of proteins. Is part of the bacterial stress response system, where it is involved in regulating the global heat shock repressor CtsR; phosphorylates arginine residues in the winged helix-turn-helix domain of CtsR, thereby preventing its binding to DNA and consequently inducing the expression of repressed genes. Protein arginine phosphorylation has a physiologically important role and is involved in the regulation of many critical cellular processes, such as protein homeostasis, motility, competence, and stringent and stress responses, by regulating gene expression and protein activity. Acts exclusively on Arg residues, since it cannot phosphorylate Tyr, Ser, Thr, His, Asp and Lys. Has no free arginine kinase activity. In Geobacillus stearothermophilus (Bacillus stearothermophilus), this protein is Protein-arginine kinase.